Consider the following 83-residue polypeptide: Probable calcium-binding protein CML29 (83 aa).

2 consecutive EF-hand domains span residues 5-40 and 43-75; these read TEKA…LGSV and DDVK…NRGL. Ca(2+)-binding residues include aspartate 18, asparagine 20, aspartate 22, lysine 24, glutamate 29, aspartate 53, aspartate 55, aspartate 57, asparagine 59, and glutamate 64.

Potential calcium sensor. The polypeptide is Probable calcium-binding protein CML29 (CML29) (Arabidopsis thaliana (Mouse-ear cress)).